The sequence spans 455 residues: Chromosomal replication initiator protein DnaA (455 aa).

Residues methionine 1–proline 70 form a domain I, interacts with DnaA modulators region. Residues proline 70–alanine 113 form a domain II region. The tract at residues lysine 87–aspartate 109 is disordered. Positions alanine 91 to arginine 102 are enriched in low complexity. The segment at proline 114–alanine 335 is domain III, AAA+ region. 4 residues coordinate ATP: glycine 158, glycine 160, lysine 161, and threonine 162. The domain IV, binds dsDNA stretch occupies residues serine 336–alanine 455.

It belongs to the DnaA family. Oligomerizes as a right-handed, spiral filament on DNA at oriC.

The protein localises to the cytoplasm. In terms of biological role, plays an essential role in the initiation and regulation of chromosomal replication. ATP-DnaA binds to the origin of replication (oriC) to initiate formation of the DNA replication initiation complex once per cell cycle. Binds the DnaA box (a 9 base pair repeat at the origin) and separates the double-stranded (ds)DNA. Forms a right-handed helical filament on oriC DNA; dsDNA binds to the exterior of the filament while single-stranded (ss)DNA is stabiized in the filament's interior. The ATP-DnaA-oriC complex binds and stabilizes one strand of the AT-rich DNA unwinding element (DUE), permitting loading of DNA polymerase. After initiation quickly degrades to an ADP-DnaA complex that is not apt for DNA replication. Binds acidic phospholipids. The chain is Chromosomal replication initiator protein DnaA from Cereibacter sphaeroides (strain ATCC 17029 / ATH 2.4.9) (Rhodobacter sphaeroides).